The primary structure comprises 446 residues: Coiled-coil domain-containing protein 112 (446 aa).

Coiled-coil stretches lie at residues K35 to D116 and E219 to R400. Disordered regions lie at residues F253–K272 and L390–I430. A compositionally biased stretch (basic and acidic residues) spans N255 to R268.

The protein resides in the cytoplasm. The protein localises to the cytoskeleton. It localises to the microtubule organizing center. Its subcellular location is the centrosome. It is found in the centriolar satellite. This Homo sapiens (Human) protein is Coiled-coil domain-containing protein 112 (CCDC112).